The chain runs to 367 residues: uncharacterized protein (367 aa).

It belongs to the mimivirus L17x/L18x family.

This is an uncharacterized protein from Acanthamoeba polyphaga mimivirus (APMV).